The chain runs to 99 residues: Thylakoid membrane protein ssl2009 (99 aa).

Residues 10–30 traverse the membrane as a helical segment; the sequence is GFLLGTVIGGVVGGILGSVLA. A coiled-coil region spans residues 50 to 84; that stretch reads NLDSEENIELARRRLEDKIAQLNLVIDDVRDQLGH.

Its subcellular location is the cellular thylakoid membrane. The protein is Thylakoid membrane protein ssl2009 of Synechocystis sp. (strain ATCC 27184 / PCC 6803 / Kazusa).